A 145-amino-acid polypeptide reads, in one-letter code: D-aminoacyl-tRNA deacylase (145 aa).

Positions Gly137 to Pro138 match the Gly-cisPro motif, important for rejection of L-amino acids motif.

This sequence belongs to the DTD family. Homodimer.

It localises to the cytoplasm. The catalysed reaction is glycyl-tRNA(Ala) + H2O = tRNA(Ala) + glycine + H(+). The enzyme catalyses a D-aminoacyl-tRNA + H2O = a tRNA + a D-alpha-amino acid + H(+). Its function is as follows. An aminoacyl-tRNA editing enzyme that deacylates mischarged D-aminoacyl-tRNAs. Also deacylates mischarged glycyl-tRNA(Ala), protecting cells against glycine mischarging by AlaRS. Acts via tRNA-based rather than protein-based catalysis; rejects L-amino acids rather than detecting D-amino acids in the active site. By recycling D-aminoacyl-tRNA to D-amino acids and free tRNA molecules, this enzyme counteracts the toxicity associated with the formation of D-aminoacyl-tRNA entities in vivo and helps enforce protein L-homochirality. The protein is D-aminoacyl-tRNA deacylase of Shewanella sp. (strain ANA-3).